A 656-amino-acid chain; its full sequence is PAN2-PAN3 deadenylation complex subunit PAN3 (656 aa).

A C3H1-type zinc finger spans residues 15-44 (SFKGTQCRNIIIHGYCKFENEGCQFNHGNS). Residues 71–104 (KTSSSFTPGKSPAVRSPDFSSLPAFQPGAPVNDQ) are disordered. Positions 128–148 (AFAPSFNPYASESFTPSVSAG) match the PABPC-interacting motif-2 (PAM-2) motif. A pseudokinase domain region spans residues 271–525 (QVFPRGSLPD…NIEDFTKLFS (255 aa)). ATP contacts are provided by residues Arg325, 375–382 (DYYPQSQS), and 428–429 (KK). Residues 526–564 (HKVLSVVNSLQYNSEYLEQQLSRELENARLFRLMCKLNA) are a coiled coil. The segment at 565 to 656 (IYGRLESRID…IDSTFRALTQ (92 aa)) is knob domain.

It belongs to the protein kinase superfamily. PAN3 family. As to quaternary structure, homodimer. Forms a heterotrimer with a catalytic subunit PAN2 to form the poly(A)-nuclease (PAN) deadenylation complex. Interacts (via PAM-2 motif) with poly(A)-binding protein PAB1 (via PABC domain), conferring substrate specificity of the enzyme complex.

Its subcellular location is the cytoplasm. Its function is as follows. Regulatory subunit of the poly(A)-nuclease (PAN) deadenylation complex, one of two cytoplasmic mRNA deadenylases involved in mRNA turnover. PAN specifically shortens poly(A) tails of RNA and the activity is stimulated by poly(A)-binding protein PAB1. PAN deadenylation is followed by rapid degradation of the shortened mRNA tails by the CCR4-NOT complex. Deadenylated mRNAs are then degraded by two alternative mechanisms, namely exosome-mediated 3'-5' exonucleolytic degradation, or deadenylation-dependent mRNA decaping and subsequent 5'-3' exonucleolytic degradation by XRN1. May also be involved in post-transcriptional maturation of mRNA poly(A) tails. PAN3 acts as a positive regulator for PAN activity, recruiting the catalytic subunit PAN2 to mRNA via its interaction with RNA and with PAB1. The protein is PAN2-PAN3 deadenylation complex subunit PAN3 of Kluyveromyces lactis (strain ATCC 8585 / CBS 2359 / DSM 70799 / NBRC 1267 / NRRL Y-1140 / WM37) (Yeast).